Consider the following 214-residue polypeptide: 3-isopropylmalate dehydratase small subunit (214 aa).

The protein belongs to the LeuD family. LeuD type 1 subfamily. As to quaternary structure, heterodimer of LeuC and LeuD.

The catalysed reaction is (2R,3S)-3-isopropylmalate = (2S)-2-isopropylmalate. Its pathway is amino-acid biosynthesis; L-leucine biosynthesis; L-leucine from 3-methyl-2-oxobutanoate: step 2/4. Catalyzes the isomerization between 2-isopropylmalate and 3-isopropylmalate, via the formation of 2-isopropylmaleate. This chain is 3-isopropylmalate dehydratase small subunit, found in Pseudomonas putida (strain ATCC 47054 / DSM 6125 / CFBP 8728 / NCIMB 11950 / KT2440).